The chain runs to 565 residues: Inositol-3-phosphate synthase (565 aa).

NAD(+) is bound by residues Gly70, Gly71, Asn72, Asn73, Asp144, Ser180, Ile181, Gln191, Arg194, Thr231, Ala232, Asn233, Thr234, Gly282, Ser283, Asp307, Ser310, Asn341, Asn342, Asp343, Lys356, Gly394, Asp395, Asp423, and Ser424. At Ser536 the chain carries Phosphoserine. Residues 546–565 (LHANGHSNGSAKLATNGNGH) are disordered. A compositionally biased stretch (polar residues) spans 550 to 565 (GHSNGSAKLATNGNGH).

The protein belongs to the myo-inositol 1-phosphate synthase family. NAD(+) is required as a cofactor. In terms of tissue distribution, higher expression in adult heads than bodies.

Its subcellular location is the cytoplasm. It carries out the reaction D-glucose 6-phosphate = 1D-myo-inositol 3-phosphate. It functions in the pathway polyol metabolism; myo-inositol biosynthesis; myo-inositol from D-glucose 6-phosphate: step 1/2. Functionally, key enzyme in myo-inositol biosynthesis pathway that catalyzes the conversion of glucose 6-phosphate to 1-myo-inositol 1-phosphate in a NAD-dependent manner. Rate-limiting enzyme in the synthesis of all inositol-containing compounds. The protein is Inositol-3-phosphate synthase (Inos) of Drosophila melanogaster (Fruit fly).